The sequence spans 586 residues: Proline--tRNA ligase (586 aa).

It belongs to the class-II aminoacyl-tRNA synthetase family. ProS type 1 subfamily. As to quaternary structure, homodimer.

It is found in the cytoplasm. It carries out the reaction tRNA(Pro) + L-proline + ATP = L-prolyl-tRNA(Pro) + AMP + diphosphate. Functionally, catalyzes the attachment of proline to tRNA(Pro) in a two-step reaction: proline is first activated by ATP to form Pro-AMP and then transferred to the acceptor end of tRNA(Pro). As ProRS can inadvertently accommodate and process non-cognate amino acids such as alanine and cysteine, to avoid such errors it has two additional distinct editing activities against alanine. One activity is designated as 'pretransfer' editing and involves the tRNA(Pro)-independent hydrolysis of activated Ala-AMP. The other activity is designated 'posttransfer' editing and involves deacylation of mischarged Ala-tRNA(Pro). The misacylated Cys-tRNA(Pro) is not edited by ProRS. The protein is Proline--tRNA ligase of Leptospira biflexa serovar Patoc (strain Patoc 1 / Ames).